Consider the following 388-residue polypeptide: Chorismate synthase (388 aa).

Residues Arg-39 and Arg-45 each contribute to the NADP(+) site. Residues Arg-132–Ser-134, Asn-251–Ala-252, Gly-296, Lys-311–Thr-315, and Arg-337 each bind FMN.

It belongs to the chorismate synthase family. In terms of assembly, homotetramer. The cofactor is FMNH2.

The enzyme catalyses 5-O-(1-carboxyvinyl)-3-phosphoshikimate = chorismate + phosphate. It participates in metabolic intermediate biosynthesis; chorismate biosynthesis; chorismate from D-erythrose 4-phosphate and phosphoenolpyruvate: step 7/7. Catalyzes the anti-1,4-elimination of the C-3 phosphate and the C-6 proR hydrogen from 5-enolpyruvylshikimate-3-phosphate (EPSP) to yield chorismate, which is the branch point compound that serves as the starting substrate for the three terminal pathways of aromatic amino acid biosynthesis. This reaction introduces a second double bond into the aromatic ring system. In Staphylococcus aureus (strain MW2), this protein is Chorismate synthase.